The primary structure comprises 271 residues: D-methionine-binding lipoprotein MetQ (271 aa).

Positions 1–22 are cleaved as a signal peptide; it reads MSLKFKSIAAISALIGTLTLVG. Residue Cys-23 is the site of N-palmitoyl cysteine attachment. The S-diacylglycerol cysteine moiety is linked to residue Cys-23.

Belongs to the NlpA lipoprotein family.

The protein resides in the cell membrane. Functionally, this protein is a component of a D-methionine permease, a binding protein-dependent, ATP-driven transport system. The polypeptide is D-methionine-binding lipoprotein MetQ (metQ) (Yersinia pestis).